Consider the following 644-residue polypeptide: Macrolide export ATP-binding/permease protein MacB (644 aa).

An ABC transporter domain is found at Ile-4–Ala-242. Gly-40 to Ser-47 provides a ligand contact to ATP. Helical transmembrane passes span Leu-270–Gly-290, Ile-524–Val-544, Leu-574–Phe-594, and Ala-607–Met-627.

It belongs to the ABC transporter superfamily. Macrolide exporter (TC 3.A.1.122) family. As to quaternary structure, homodimer.

Its subcellular location is the cell inner membrane. In terms of biological role, non-canonical ABC transporter that contains transmembrane domains (TMD), which form a pore in the inner membrane, and an ATP-binding domain (NBD), which is responsible for energy generation. Confers resistance against macrolides. This chain is Macrolide export ATP-binding/permease protein MacB, found in Neisseria gonorrhoeae (strain ATCC 700825 / FA 1090).